Consider the following 792-residue polypeptide: Putative cellulose synthase-like protein H3 (792 aa).

2 helical membrane passes run Ala-25–Ala-45 and Val-55–Leu-75. The interval Gly-132 to Ala-154 is disordered. The segment covering Gly-140 to Glu-151 has biased composition (gly residues). Active-site residues include Asp-181 and Asp-501. 6 helical membrane passes run Val-579–Leu-599, Phe-613–Met-632, Ile-650–Leu-670, Val-706–Trp-726, Gly-739–Val-759, and Tyr-768–Cys-788.

The protein belongs to the glycosyltransferase 2 family. Plant cellulose synthase-like H subfamily.

It is found in the golgi apparatus membrane. In terms of biological role, thought to be a Golgi-localized beta-glycan synthase that polymerize the backbones of noncellulosic polysaccharides (hemicelluloses) of plant cell wall. The polypeptide is Putative cellulose synthase-like protein H3 (CSLH3) (Oryza sativa subsp. japonica (Rice)).